The chain runs to 186 residues: Adrenodoxin, mitochondrial (186 aa).

The transit peptide at 1–58 directs the protein to the mitochondrion; that stretch reads MAARLLRVASAALGDTAGRWRLLARPRAGAGGLRGSRGPGLGGGAVATRTLSVSGRAQ. The residue at position 61 (Ser61) is a Phosphoserine. Lys64 is subject to N6-acetyllysine; alternate. The residue at position 64 (Lys64) is an N6-succinyllysine; alternate. The 105-residue stretch at 65–169 folds into the 2Fe-2S ferredoxin-type domain; sequence ITVHFINRDG…NMTVRVPDAV (105 aa). [2Fe-2S] cluster contacts are provided by Cys104, Cys110, Cys113, and Cys150. Lys156 carries the N6-succinyllysine modification. Residue Ser175 is modified to Phosphoserine.

This sequence belongs to the adrenodoxin/putidaredoxin family. As to quaternary structure, interacts with CYP11A1. It depends on [2Fe-2S] cluster as a cofactor. Detected in adrenal cortex and corpus luteum (at protein level).

The protein resides in the mitochondrion matrix. Essential for the synthesis of various steroid hormones. Participates in the reduction of mitochondrial cytochrome P450 for steroidogenesis. Transfers electrons from adrenodoxin reductase to CYP11A1, a cytochrome P450 that catalyzes cholesterol side-chain cleavage to produce pregnenolone, the precursor of most steroid hormones. Does not form a ternary complex with adrenodoxin reductase and CYP11A1 but shuttles between the two enzymes to transfer electrons. This is Adrenodoxin, mitochondrial (FDX1) from Bos taurus (Bovine).